The following is a 105-amino-acid chain: MGPQQDRSAAKPYANGSTAAAAAAGRKENNKVVRYRECQRNHAASIGGHAVDGCREFMASGADGTAAALLCAACGCHQSFHRREVEAAAAECDCSSDTSSGTGRR.

Residues 1 to 29 (MGPQQDRSAAKPYANGSTAAAAAAGRKEN) are disordered. Residues 35–84 (YRECQRNHAASIGGHAVDGCREFMASGADGTAAALLCAACGCHQSFHRRE) form a ZF-HD dimerization-type; degenerate zinc finger.

As to quaternary structure, homo- and heterodimers.

The protein localises to the cytoplasm. Functionally, inhibits zinc finger homeodomain (ZHD) transcription factors, by interacting with them to prevent both their nuclear localization and their DNA-binding properties. The chain is Mini zinc finger protein 2 (MIF2) from Oryza sativa subsp. indica (Rice).